The chain runs to 793 residues: Xaa-Pro dipeptidyl-peptidase (793 aa).

Active-site charge relay system residues include Ser363, Asp483, and His514.

Belongs to the peptidase S15 family. In terms of assembly, homodimer.

The protein localises to the cytoplasm. It carries out the reaction Hydrolyzes Xaa-Pro-|- bonds to release unblocked, N-terminal dipeptides from substrates including Ala-Pro-|-p-nitroanilide and (sequentially) Tyr-Pro-|-Phe-Pro-|-Gly-Pro-|-Ile.. In terms of biological role, removes N-terminal dipeptides sequentially from polypeptides having unsubstituted N-termini provided that the penultimate residue is proline. The polypeptide is Xaa-Pro dipeptidyl-peptidase (Lactobacillus helveticus (strain DPC 4571)).